A 186-amino-acid chain; its full sequence is Probable peptidyl-tRNA hydrolase 2 (186 aa).

It belongs to the PTH2 family.

The catalysed reaction is an N-acyl-L-alpha-aminoacyl-tRNA + H2O = an N-acyl-L-amino acid + a tRNA + H(+). The natural substrate for this enzyme may be peptidyl-tRNAs which drop off the ribosome during protein synthesis. In Drosophila melanogaster (Fruit fly), this protein is Probable peptidyl-tRNA hydrolase 2.